Reading from the N-terminus, the 99-residue chain is (4S)-4-hydroxy-5-phosphonooxypentane-2,3-dione isomerase (99 aa).

The 90-residue stretch at His2–Phe91 folds into the ABM domain.

Belongs to the LsrG family. In terms of assembly, homodimer.

It localises to the cytoplasm. The enzyme catalyses (2S)-2-hydroxy-3,4-dioxopentyl phosphate = 3-hydroxy-2,4-dioxopentyl phosphate. Involved in the degradation of phospho-AI-2, thereby terminating induction of the lsr operon and closing the AI-2 signaling cycle. Catalyzes the conversion of (4S)-4-hydroxy-5-phosphonooxypentane-2,3-dione (P-DPD) to 3-hydroxy-5-phosphonooxypentane-2,4-dione (P-HPD). The protein is (4S)-4-hydroxy-5-phosphonooxypentane-2,3-dione isomerase of Photorhabdus laumondii subsp. laumondii (strain DSM 15139 / CIP 105565 / TT01) (Photorhabdus luminescens subsp. laumondii).